A 648-amino-acid chain; its full sequence is cAMP-dependent protein kinase catalytic subunit (648 aa).

4 stretches are compositionally biased toward low complexity: residues 1–20 (MSNS…TINN), 46–67 (SGNN…NSSG), 136–175 (QQQP…PQQQ), and 232–254 (NTPS…NPHT). 4 disordered regions span residues 1–25 (MSNS…KVNV), 40–86 (GGGG…TKMD), 121–175 (KVPS…PQQQ), and 219–290 (QQQQ…DTNP). Polar residues predominate over residues 255 to 290 (SGLSLQHAHSSYTPSNVLHSPTHFQSSLPTRLDTNP). The region spanning 336 to 590 (FKQIRVIGTG…ALDVKNHRWF (255 aa)) is the Protein kinase domain. ATP contacts are provided by residues 342-350 (IGTGTFGKV) and K365. D459 functions as the Proton acceptor in the catalytic mechanism. At T490 the chain carries Phosphothreonine. Residues 591-648 (SDINWERLYQRRDNGPFIPKIQHQGDSSNFEMYDEEEMVEEPPSSNYVDPYAHLFKDF) enclose the AGC-kinase C-terminal domain.

This sequence belongs to the protein kinase superfamily. AGC Ser/Thr protein kinase family. cAMP subfamily. In terms of assembly, in Dictyostelium the holoenzyme is a dimer composed of a regulatory (R) and a catalytic (C) subunit. In the presence of cAMP it dissociates into the active C subunit and an R monomer.

It carries out the reaction L-seryl-[protein] + ATP = O-phospho-L-seryl-[protein] + ADP + H(+). The enzyme catalyses L-threonyl-[protein] + ATP = O-phospho-L-threonyl-[protein] + ADP + H(+). Its function is as follows. Essential for differentiation and fruit morphogenesis. The sequence is that of cAMP-dependent protein kinase catalytic subunit (pkaC) from Dictyostelium discoideum (Social amoeba).